Here is a 137-residue protein sequence, read N- to C-terminus: Probable disulfide formation protein C (137 aa).

Residues 6–25 (ENLMLGSWLTALTAMLGSLY) form a helical membrane-spanning segment. A disulfide bridge connects residues Cys-35 and Cys-38. The next 2 helical transmembrane spans lie at 40-59 (YQRI…YLKR) and 66-83 (YSLW…YHYS). A disulfide bridge connects residues Cys-97 and Cys-102. A helical membrane pass occupies residues 111 to 133 (GFVTIPFLAFTAFVIIFICSLLI).

Belongs to the DsbB family. BdbC subfamily.

The protein localises to the cell membrane. Its function is as follows. Required for disulfide bond formation in some proteins. This Halalkalibacterium halodurans (strain ATCC BAA-125 / DSM 18197 / FERM 7344 / JCM 9153 / C-125) (Bacillus halodurans) protein is Probable disulfide formation protein C.